A 291-amino-acid polypeptide reads, in one-letter code: Ribosomal RNA small subunit methyltransferase A (291 aa).

S-adenosyl-L-methionine contacts are provided by His37, Leu39, Gly64, Glu85, Asp110, and Asn131.

Belongs to the class I-like SAM-binding methyltransferase superfamily. rRNA adenine N(6)-methyltransferase family. RsmA subfamily.

It localises to the cytoplasm. The enzyme catalyses adenosine(1518)/adenosine(1519) in 16S rRNA + 4 S-adenosyl-L-methionine = N(6)-dimethyladenosine(1518)/N(6)-dimethyladenosine(1519) in 16S rRNA + 4 S-adenosyl-L-homocysteine + 4 H(+). Specifically dimethylates two adjacent adenosines (A1518 and A1519) in the loop of a conserved hairpin near the 3'-end of 16S rRNA in the 30S particle. May play a critical role in biogenesis of 30S subunits. This Dehalococcoides mccartyi (strain CBDB1) protein is Ribosomal RNA small subunit methyltransferase A.